The chain runs to 150 residues: UPF0756 membrane protein HD_1071 (150 aa).

A run of 4 helical transmembrane segments spans residues 1-21 (MSLQ…LGVL), 52-72 (YGLT…IVSG), 82-102 (ILSW…WLGG), and 114-134 (IITG…GIPV).

It belongs to the UPF0756 family.

It localises to the cell membrane. This Haemophilus ducreyi (strain 35000HP / ATCC 700724) protein is UPF0756 membrane protein HD_1071.